The primary structure comprises 79 residues: Acyl carrier protein (79 aa).

A Carrier domain is found at 2–77 (SDIEARVRKI…HAIDYIKSNA (76 aa)). Serine 37 carries the post-translational modification O-(pantetheine 4'-phosphoryl)serine.

It belongs to the acyl carrier protein (ACP) family. Post-translationally, 4'-phosphopantetheine is transferred from CoA to a specific serine of apo-ACP by AcpS. This modification is essential for activity because fatty acids are bound in thioester linkage to the sulfhydryl of the prosthetic group.

The protein resides in the cytoplasm. It functions in the pathway lipid metabolism; fatty acid biosynthesis. Functionally, carrier of the growing fatty acid chain in fatty acid biosynthesis. This chain is Acyl carrier protein, found in Xylella fastidiosa (strain M23).